We begin with the raw amino-acid sequence, 87 residues long: U1-theraphotoxin-Ct1a (87 aa).

Residues Met-1 to Ala-23 form the signal peptide. A propeptide spanning residues Glu-24–Arg-48 is cleaved from the precursor.

It belongs to the neurotoxin 12 (Hwtx-2) family. 03 (juruin) subfamily. Contains 3 disulfide bonds. Two different connectivities are observed in similar proteins (C1-C3, C2-C5, C4-C6 or C1-C4, C2-C5, C3-C6). As to expression, expressed by the venom gland.

It is found in the secreted. Its function is as follows. This toxin causes paralysis and death to sheep blowflies. It may inhibit voltage-gated calcium channels. In Coremiocnemis tropix (Australian tarantula spider), this protein is U1-theraphotoxin-Ct1a.